We begin with the raw amino-acid sequence, 88 residues long: Large ribosomal subunit protein bL27 (88 aa).

The protein belongs to the bacterial ribosomal protein bL27 family.

The protein is Large ribosomal subunit protein bL27 of Acidobacterium capsulatum (strain ATCC 51196 / DSM 11244 / BCRC 80197 / JCM 7670 / NBRC 15755 / NCIMB 13165 / 161).